A 308-amino-acid chain; its full sequence is Porphobilinogen deaminase (308 aa).

Residue cysteine 240 is modified to S-(dipyrrolylmethanemethyl)cysteine.

The protein belongs to the HMBS family. As to quaternary structure, monomer. It depends on dipyrromethane as a cofactor.

It carries out the reaction 4 porphobilinogen + H2O = hydroxymethylbilane + 4 NH4(+). It participates in porphyrin-containing compound metabolism; protoporphyrin-IX biosynthesis; coproporphyrinogen-III from 5-aminolevulinate: step 2/4. In terms of biological role, tetrapolymerization of the monopyrrole PBG into the hydroxymethylbilane pre-uroporphyrinogen in several discrete steps. This chain is Porphobilinogen deaminase, found in Campylobacter lari (strain RM2100 / D67 / ATCC BAA-1060).